A 473-amino-acid chain; its full sequence is MANSFPLRVLPTIDPSAGHTFITPSKRIHESEDVSEFLISKAYVDIMTFLLQLNRAMIPVKLADGTVQSWPINTDAVEFSAPVRQLQQLLTKLEELLAEAPPDTGPRRFGNISFRRWYELVESRASELLGECLPSELLQAKSSDPNSVTAEAELKAYFLGSWGSPQRLDYGTGHELSFLAFLAGIWKLNGFPKTTPGVEERAIVLGVIQPYLELVRTIIKRYTLEPAGSHGVWGLDDHSFIPYILGSAQLAPAISETDPTPEEGSLPGAPSPNGVTKAHIVERERLTNMYFSAIGFIYDVKKGPFWEHSPMLYDISGIQAGWGKINKGMIKMYNAEVLSKFPVVQHFPFGSLFSWDRDPNAVPPPTSAHMSTTQSQSRGPAVPSAGQTPPSGTRAPWATATQAAPPAGAGTAAPWAAKRDGCTPGKPPTSLPDTSRLPPGPMAPTRAPWAASSTGQAPGGDPTHVPTKAPWAK.

Residues asparagine 360 to lysine 473 form a disordered region. Positions alanine 368–arginine 378 are enriched in polar residues. The segment covering alanine 395 to alanine 416 has biased composition (low complexity).

The protein belongs to the PTPA-type PPIase family.

The protein resides in the cytoplasm. It localises to the nucleus. It carries out the reaction [protein]-peptidylproline (omega=180) = [protein]-peptidylproline (omega=0). PPIases accelerate the folding of proteins. It catalyzes the cis-trans isomerization of proline imidic peptide bonds in oligopeptides. Acts as a regulatory subunit for PP2A-like phosphatases modulating their activity or substrate specificity, probably by inducing a conformational change in the catalytic subunit, a direct target of the PPIase. Can reactivate inactive phosphatase PP2A-phosphatase methylesterase complexes (PP2Ai) in presence of ATP and Mg(2+) by dissociating the inactive form from the complex. This Aspergillus fumigatus (strain ATCC MYA-4609 / CBS 101355 / FGSC A1100 / Af293) (Neosartorya fumigata) protein is Serine/threonine-protein phosphatase 2A activator 1 (rrd1).